An 879-amino-acid chain; its full sequence is Prostaglandin F2 receptor negative regulator (879 aa).

Residues 1–21 (MGRPAPRPLLLALLSLAVCRG) form the signal peptide. Ig-like C2-type domains follow at residues 22-129 (RVVR…ATVQ) and 149-268 (PSSR…KAVE). Residues 22 to 832 (RVVRVPAGTL…MDVLNAFKYP (811 aa)) lie on the Extracellular side of the membrane. Intrachain disulfides connect Cys-43–Cys-119 and Cys-169–Cys-247. A glycan (N-linked (GlcNAc...) asparagine) is linked at Asn-44. Residues 89-91 (RGD) carry the Cell attachment site motif. Residue Thr-271 is modified to Phosphothreonine. 4 consecutive Ig-like C2-type domains span residues 276–389 (PTAL…WHKV), 406–527 (PEYQ…RNSS), 544–662 (ASED…AWSP), and 688–813 (PIFN…AEIH). Cysteines 299 and 373 form a disulfide. N-linked (GlcNAc...) asparagine glycosylation is found at Asn-300, Asn-383, and Asn-413. The Endoplasmic reticulum retention signal signature appears at 424 to 427 (PTEL). Cys-429 and Cys-515 are oxidised to a cystine. Residues Asn-525, Asn-600, Asn-618, and Asn-691 are each glycosylated (N-linked (GlcNAc...) asparagine). Residues Cys-571 and Cys-655 are joined by a disulfide bond. The Cell attachment site motif lies at 703 to 705 (RGD). A disulfide bridge connects residues Cys-711 and Cys-793. The chain crosses the membrane as a helical span at residues 833-853 (LLIGVGLSTVIGLLSCLIGYC). The Cytoplasmic segment spans residues 854 to 879 (SSHWCCKKEVRETRRERRRLMSMEMD).

In terms of assembly, interacts with CD9 and CD81. Part of a complex composed of CD9, CD81 and IGSF8. Also seems to interact with CD63, CD82 and CD151. Reproductive tissues, lung and heart.

The protein resides in the endoplasmic reticulum membrane. The protein localises to the golgi apparatus. It localises to the trans-Golgi network membrane. In terms of biological role, inhibits the binding of prostaglandin F2-alpha (PGF2-alpha) to its specific FP receptor, by decreasing the receptor number rather than the affinity constant. Functional coupling with the prostaglandin F2-alpha receptor seems to occur. In myoblasts, associates with tetraspanins CD9 and CD81 to prevent myotube fusion during muscle regeneration. The protein is Prostaglandin F2 receptor negative regulator (Ptgfrn) of Rattus norvegicus (Rat).